The following is a 436-amino-acid chain: UPF0597 protein YhaM (436 aa).

Belongs to the UPF0597 family.

The sequence is that of UPF0597 protein YhaM from Escherichia coli O6:H1 (strain CFT073 / ATCC 700928 / UPEC).